Here is a 519-residue protein sequence, read N- to C-terminus: DDB1- and CUL4-associated factor 17 (519 aa).

A run of 2 helical transmembrane segments spans residues 186–206 and 222–242; these read VLLY…ILEI and GILI…QAII.

In terms of assembly, interacts with DDB1, CUL4A and CUL4B. As to expression, ubiquitously expressed in the embryo, with higher expression in brain, liver and skin tissues.

It localises to the membrane. Its subcellular location is the nucleus. The protein localises to the nucleolus. Its pathway is protein modification; protein ubiquitination. Its function is as follows. May function as a substrate receptor for CUL4-DDB1 E3 ubiquitin-protein ligase complex. In Mus musculus (Mouse), this protein is DDB1- and CUL4-associated factor 17 (Dcaf17).